Reading from the N-terminus, the 152-residue chain is Anaerobic nitrite reductase HBI (152 aa).

In terms of domain architecture, Globin spans 2–151 (ALTEKQEALL…LVATIKAEMK (150 aa)). Residues 35 to 39 (EAAPE) carry the Homodimerization motif. Ser-45, Lys-59, His-63, Arg-93, and His-98 together coordinate heme b. The short motif at 105-117 (DPHFEVMKGALLG) is the Homodimerization element.

This sequence belongs to the plant globin family. Homodimer. It depends on heme b as a cofactor. Root nodules.

It localises to the cytoplasm. It is found in the nucleus. It carries out the reaction Fe(III)-heme b-[protein] + nitric oxide + H2O = Fe(II)-heme b-[protein] + nitrite + 2 H(+). In terms of biological role, phytoglobin that reduces nitrite to nitric oxide (NO) under anoxic conditions (e.g. during flooding or in waterlogged soil) and upon root nodulation. Required for general plant development and during nodulation, especially for the onset of symbiosis. Monitors nitric oxide (NO) levels during early phase of the nitrogen-fixing symbiosis and buffers oxygen in functioning nodules. May not function as an oxygen storage or transport protein. Has an unusually high affinity for O(2) through a hexacoordinate heme iron because of a very low dissociation constant. This is Anaerobic nitrite reductase HBI from Casuarina glauca (Swamp oak).